Here is a 187-residue protein sequence, read N- to C-terminus: UPF0301 protein YqgE (187 aa).

Belongs to the UPF0301 (AlgH) family.

This is UPF0301 protein YqgE from Salmonella choleraesuis (strain SC-B67).